We begin with the raw amino-acid sequence, 269 residues long: Photosystem I assembly factor PSA3, chloroplastic (269 aa).

The transit peptide at 1–37 (MGALPVAHSLALTAAFLPCRRPAAHGRCRRRRYRAVV) directs the protein to the chloroplast.

It is found in the plastid. The protein resides in the chloroplast thylakoid membrane. Its function is as follows. Nuclear genome-encoded factor required for the accumulation of photosystem I (PSI). Functions as a PSI biogenesis factor. Cooperates with PYG7 to promote the stable assembly of PSI in the thylakoid membrane. May target primarily the PsaC subunit. Does not seem to be required for the expression of chloroplast genes encoding PSI subunits. The protein is Photosystem I assembly factor PSA3, chloroplastic of Zea mays (Maize).